The following is a 171-amino-acid chain: 3-hydroxydecanoyl-[acyl-carrier-protein] dehydratase (171 aa).

The active site involves histidine 70.

Belongs to the thioester dehydratase family. FabA subfamily. Homodimer.

The protein resides in the cytoplasm. It carries out the reaction a (3R)-hydroxyacyl-[ACP] = a (2E)-enoyl-[ACP] + H2O. The enzyme catalyses (3R)-hydroxydecanoyl-[ACP] = (2E)-decenoyl-[ACP] + H2O. It catalyses the reaction (2E)-decenoyl-[ACP] = (3Z)-decenoyl-[ACP]. It functions in the pathway lipid metabolism; fatty acid biosynthesis. Its function is as follows. Necessary for the introduction of cis unsaturation into fatty acids. Catalyzes the dehydration of (3R)-3-hydroxydecanoyl-ACP to E-(2)-decenoyl-ACP and then its isomerization to Z-(3)-decenoyl-ACP. Can catalyze the dehydratase reaction for beta-hydroxyacyl-ACPs with saturated chain lengths up to 16:0, being most active on intermediate chain length. The sequence is that of 3-hydroxydecanoyl-[acyl-carrier-protein] dehydratase from Pseudomonas fluorescens (strain SBW25).